The sequence spans 90 residues: Co-chaperonin GroES (90 aa).

This sequence belongs to the GroES chaperonin family. In terms of assembly, heptamer of 7 subunits arranged in a ring. Interacts with the chaperonin GroEL.

Its subcellular location is the cytoplasm. In terms of biological role, together with the chaperonin GroEL, plays an essential role in assisting protein folding. The GroEL-GroES system forms a nano-cage that allows encapsulation of the non-native substrate proteins and provides a physical environment optimized to promote and accelerate protein folding. GroES binds to the apical surface of the GroEL ring, thereby capping the opening of the GroEL channel. In Bacteroides thetaiotaomicron (strain ATCC 29148 / DSM 2079 / JCM 5827 / CCUG 10774 / NCTC 10582 / VPI-5482 / E50), this protein is Co-chaperonin GroES.